The following is a 227-amino-acid chain: Phosphoribosylformylglycinamidine synthase subunit PurQ (227 aa).

The Glutamine amidotransferase type-1 domain occupies 3 to 225 (FAVIVFPGSN…LKYWRETYVV (223 aa)). Cys86 acts as the Nucleophile in catalysis. Active-site residues include His194 and Glu196.

In terms of assembly, part of the FGAM synthase complex composed of 1 PurL, 1 PurQ and 2 PurS subunits.

It localises to the cytoplasm. It catalyses the reaction N(2)-formyl-N(1)-(5-phospho-beta-D-ribosyl)glycinamide + L-glutamine + ATP + H2O = 2-formamido-N(1)-(5-O-phospho-beta-D-ribosyl)acetamidine + L-glutamate + ADP + phosphate + H(+). The catalysed reaction is L-glutamine + H2O = L-glutamate + NH4(+). The protein operates within purine metabolism; IMP biosynthesis via de novo pathway; 5-amino-1-(5-phospho-D-ribosyl)imidazole from N(2)-formyl-N(1)-(5-phospho-D-ribosyl)glycinamide: step 1/2. Functionally, part of the phosphoribosylformylglycinamidine synthase complex involved in the purines biosynthetic pathway. Catalyzes the ATP-dependent conversion of formylglycinamide ribonucleotide (FGAR) and glutamine to yield formylglycinamidine ribonucleotide (FGAM) and glutamate. The FGAM synthase complex is composed of three subunits. PurQ produces an ammonia molecule by converting glutamine to glutamate. PurL transfers the ammonia molecule to FGAR to form FGAM in an ATP-dependent manner. PurS interacts with PurQ and PurL and is thought to assist in the transfer of the ammonia molecule from PurQ to PurL. In Bacillus cytotoxicus (strain DSM 22905 / CIP 110041 / 391-98 / NVH 391-98), this protein is Phosphoribosylformylglycinamidine synthase subunit PurQ.